The sequence spans 204 residues: Dihydroorotase (204 aa).

His-34 serves as a coordination point for Zn(2+). Residue Leu-79 participates in substrate binding. Zn(2+) is bound at residue Asp-107. Asp-107 is a catalytic residue. Substrate-binding residues include His-111 and Ala-123.

This sequence belongs to the metallo-dependent hydrolases superfamily. DHOase family. Class II DHOase subfamily. As to quaternary structure, homodimer. Requires Zn(2+) as cofactor.

It carries out the reaction (S)-dihydroorotate + H2O = N-carbamoyl-L-aspartate + H(+). The protein operates within pyrimidine metabolism; UMP biosynthesis via de novo pathway; (S)-dihydroorotate from bicarbonate: step 3/3. Catalyzes the reversible cyclization of carbamoyl aspartate to dihydroorotate. This chain is Dihydroorotase, found in Serratia marcescens.